A 153-amino-acid polypeptide reads, in one-letter code: Riboflavin synthase (153 aa).

Belongs to the DMRL synthase family. As to quaternary structure, homooligomer. It depends on Mg(2+) as a cofactor.

It carries out the reaction 2 6,7-dimethyl-8-(1-D-ribityl)lumazine + H(+) = 5-amino-6-(D-ribitylamino)uracil + riboflavin. It participates in cofactor biosynthesis; riboflavin biosynthesis; riboflavin from 2-hydroxy-3-oxobutyl phosphate and 5-amino-6-(D-ribitylamino)uracil: step 2/2. With respect to regulation, inhibited by EDTA. Its function is as follows. The relatively low activity of this enzyme suggested that 6,7-dimethyl-8-ribityllumazine might not be its natural substrate. The protein is Riboflavin synthase (ribC) of Methanothermobacter marburgensis (strain ATCC BAA-927 / DSM 2133 / JCM 14651 / NBRC 100331 / OCM 82 / Marburg) (Methanobacterium thermoautotrophicum).